The chain runs to 276 residues: MHHPAEHSPLGKTSEYVSRYTPSLLFPIARAAKWAELGLSAATLPYRGVDIWNCYELSWLTPAGKPVVAIGEFSIPADSPNIIESKSFKLYLNSLNQSSFDSRDALRAVLEQDLSVAAGAAVGVRLRSLDEVAEEGVGRLPGRCIDELEIAVDGYERPRPELLRCDAGRFVEEQLYSHLLKSNCPVTGQPDWGTLVVDYRGPALDPASLLAYLVSFRQHQDFHEQCVERIFLDLRRLLQPQALTVYARYVRRGGLDINPYRSLVDVAPDNRRLVRQ.

Substrate is bound at residue 83–85 (IES). Position 85 to 86 (85 to 86 (SK)) interacts with NADPH. Residue C184 is the Thioimide intermediate of the active site. The active-site Proton donor is the D191. Residue 223–224 (HE) coordinates substrate. Residue 252-253 (RG) participates in NADPH binding.

Belongs to the GTP cyclohydrolase I family. QueF type 2 subfamily. As to quaternary structure, homodimer.

Its subcellular location is the cytoplasm. It carries out the reaction 7-aminomethyl-7-carbaguanine + 2 NADP(+) = 7-cyano-7-deazaguanine + 2 NADPH + 3 H(+). It functions in the pathway tRNA modification; tRNA-queuosine biosynthesis. Catalyzes the NADPH-dependent reduction of 7-cyano-7-deazaguanine (preQ0) to 7-aminomethyl-7-deazaguanine (preQ1). The protein is NADPH-dependent 7-cyano-7-deazaguanine reductase of Pseudomonas paraeruginosa (strain DSM 24068 / PA7) (Pseudomonas aeruginosa (strain PA7)).